A 330-amino-acid chain; its full sequence is Ribosomal RNA small subunit methyltransferase H (330 aa).

Residues 40-42, aspartate 58, phenylalanine 85, aspartate 101, and glutamine 108 each bind S-adenosyl-L-methionine; that span reads GGY.

This sequence belongs to the methyltransferase superfamily. RsmH family.

It is found in the cytoplasm. It carries out the reaction cytidine(1402) in 16S rRNA + S-adenosyl-L-methionine = N(4)-methylcytidine(1402) in 16S rRNA + S-adenosyl-L-homocysteine + H(+). Functionally, specifically methylates the N4 position of cytidine in position 1402 (C1402) of 16S rRNA. This Roseobacter denitrificans (strain ATCC 33942 / OCh 114) (Erythrobacter sp. (strain OCh 114)) protein is Ribosomal RNA small subunit methyltransferase H.